A 517-amino-acid polypeptide reads, in one-letter code: Meiosis-specific transcription factor mei4 (517 aa).

A DNA-binding region (fork-head) is located at residues 81 to 172; the sequence is KPPCSYATLI…QNFVSVRLHR (92 aa). The tract at residues 170–278 is disordered; it reads LHRSHSTDSN…PNAETQEDLP (109 aa). A compositionally biased stretch (low complexity) spans 209-223; sequence NSFNSSTSTSGSSSN. Polar residues predominate over residues 230–246; the sequence is NDASQPSNQDSSLNSNI. The segment covering 254 to 270 has biased composition (low complexity); the sequence is SNVQSNSSSSENVPKPN.

It localises to the nucleus. In terms of biological role, functions as a meiosis-specific transcription factor. Binds to the 5'-GTAAAYA-3' consensus sequence of the promoter of the spo6 gene. The chain is Meiosis-specific transcription factor mei4 (mei4) from Schizosaccharomyces pombe (strain 972 / ATCC 24843) (Fission yeast).